Reading from the N-terminus, the 65-residue chain is Large ribosomal subunit protein bL35 (65 aa).

Residues 1 to 26 form a disordered region; it reads MPKIKTVRGAAKRFKKTASGGFKRKQ. The segment covering 10–26 has biased composition (basic residues); the sequence is AAKRFKKTASGGFKRKQ.

Belongs to the bacterial ribosomal protein bL35 family.

The polypeptide is Large ribosomal subunit protein bL35 (Haemophilus ducreyi (strain 35000HP / ATCC 700724)).